The primary structure comprises 157 residues: ATP synthase subunit b (157 aa).

The helical transmembrane segment at 7–27 (LIAQLVVFFILAWFTMKFVWP) threads the bilayer.

This sequence belongs to the ATPase B chain family. F-type ATPases have 2 components, F(1) - the catalytic core - and F(0) - the membrane proton channel. F(1) has five subunits: alpha(3), beta(3), gamma(1), delta(1), epsilon(1). F(0) has three main subunits: a(1), b(2) and c(10-14). The alpha and beta chains form an alternating ring which encloses part of the gamma chain. F(1) is attached to F(0) by a central stalk formed by the gamma and epsilon chains, while a peripheral stalk is formed by the delta and b chains.

It is found in the cell inner membrane. F(1)F(0) ATP synthase produces ATP from ADP in the presence of a proton or sodium gradient. F-type ATPases consist of two structural domains, F(1) containing the extramembraneous catalytic core and F(0) containing the membrane proton channel, linked together by a central stalk and a peripheral stalk. During catalysis, ATP synthesis in the catalytic domain of F(1) is coupled via a rotary mechanism of the central stalk subunits to proton translocation. In terms of biological role, component of the F(0) channel, it forms part of the peripheral stalk, linking F(1) to F(0). This chain is ATP synthase subunit b, found in Azoarcus sp. (strain BH72).